A 639-amino-acid polypeptide reads, in one-letter code: Sec1 family domain-containing protein 1 (639 aa).

Phosphoserine occurs at positions 34, 300, and 525.

It belongs to the STXBP/unc-18/SEC1 family. Interacts with STX17. Interacts with STX5A. Interacts with the COG complex via COG4.

It is found in the cytoplasm. The protein resides in the endoplasmic reticulum membrane. It localises to the golgi apparatus. Its subcellular location is the golgi stack membrane. Its function is as follows. Plays a role in SNARE-pin assembly and Golgi-to-ER retrograde transport via its interaction with COG4. Involved in vesicular transport between the endoplasmic reticulum and the Golgi. The polypeptide is Sec1 family domain-containing protein 1 (Scfd1) (Mus musculus (Mouse)).